The following is a 285-amino-acid chain: DVEERADKRRPIWIMGHMVNAIAQIDEFVNLGANSIETDVSFDDNANPEYTYHGIPCDCGRSCLKWENFNDFLKGLRSATTPGNAKYQAKLILVVFDLKTGSLYDNQANEAGKKLAKNLLKHYWNNGNNGGRAYIVLSIPDLNHYPLIKGFKDQLTQDGHPELMDKVGHDFSGNDAIGDVGNAYKKAGISGHVWQSDGITNCLLRGLDRVKQAIANRDSANGFINKVYYWTVDKRATTRDALDAGVDGVMTNYPDVITDVLNESAYKNKFRVASYEDNPWETFKK.

Residues 1 to 5 (DVEER) constitute a propeptide that is removed on maturation. His-17 is a catalytic residue. Mg(2+) is bound by residues Glu-37 and Asp-39. The active-site Nucleophile is His-53. 2 cysteine pairs are disulfide-bonded: Cys-57–Cys-63 and Cys-59–Cys-202. Asp-97 lines the Mg(2+) pocket. Asn-262 carries an N-linked (GlcNAc...) asparagine glycan.

This sequence belongs to the arthropod phospholipase D family. Class II subfamily. Class IIa sub-subfamily. Mg(2+) serves as cofactor. As to expression, expressed by the venom gland.

It is found in the secreted. The enzyme catalyses an N-(acyl)-sphingosylphosphocholine = an N-(acyl)-sphingosyl-1,3-cyclic phosphate + choline. The catalysed reaction is an N-(acyl)-sphingosylphosphoethanolamine = an N-(acyl)-sphingosyl-1,3-cyclic phosphate + ethanolamine. It carries out the reaction a 1-acyl-sn-glycero-3-phosphocholine = a 1-acyl-sn-glycero-2,3-cyclic phosphate + choline. It catalyses the reaction a 1-acyl-sn-glycero-3-phosphoethanolamine = a 1-acyl-sn-glycero-2,3-cyclic phosphate + ethanolamine. Dermonecrotic toxins cleave the phosphodiester linkage between the phosphate and headgroup of certain phospholipids (sphingolipid and lysolipid substrates), forming an alcohol (often choline) and a cyclic phosphate. This toxin acts on sphingomyelin (SM) with high activity. It may also act on ceramide phosphoethanolamine (CPE), lysophosphatidylcholine (LPC) and lysophosphatidylethanolamine (LPE), but not on lysophosphatidylserine (LPS), and lysophosphatidylglycerol (LPG). It acts by transphosphatidylation, releasing exclusively cyclic phosphate products as second products. Shows high hemolytic activity. Induces dermonecrosis, vascular permeability, edema, inflammatory response, and platelet aggregation. Also shows cytotoxicity against renal epithelial cells. In addition, also induces hemolysis in a complement-dependent manner and probably also in a complement-independent manner. The hemolysis provoked in a complement-independent manner may be composed of several steps. The toxin may bind to erythrocyte membranes, may hydrolyze membrane phospholipids (SM and LPC) thus generating metabolism products that may cause hemolysis, probably by provoking an increase of calcium inside cells. The calcium influx may be due to the opening of L-type calcium channels, since L-type calcium channel blockers inhibit calcium influx. In vivo, is lethal to mice when intraperitoneally injected. In Loxosceles intermedia (Brown spider), this protein is Dermonecrotic toxin LiSicTox-alphaIA2aii.